Reading from the N-terminus, the 297-residue chain is N-acetylmuramic acid 6-phosphate etherase (297 aa).

Residues 55-218 (AAKRYSKGGR…STGVMIKQGK (164 aa)) form the SIS domain. Glutamate 83 (proton donor) is an active-site residue. Glutamate 114 is a catalytic residue.

Belongs to the GCKR-like family. MurNAc-6-P etherase subfamily. Homodimer.

The catalysed reaction is N-acetyl-D-muramate 6-phosphate + H2O = N-acetyl-D-glucosamine 6-phosphate + (R)-lactate. The protein operates within amino-sugar metabolism; N-acetylmuramate degradation. Its function is as follows. Specifically catalyzes the cleavage of the D-lactyl ether substituent of MurNAc 6-phosphate, producing GlcNAc 6-phosphate and D-lactate. The polypeptide is N-acetylmuramic acid 6-phosphate etherase (Lactobacillus gasseri (strain ATCC 33323 / DSM 20243 / BCRC 14619 / CIP 102991 / JCM 1131 / KCTC 3163 / NCIMB 11718 / NCTC 13722 / AM63)).